The sequence spans 108 residues: Inner membrane protein H108R (108 aa).

A helical membrane pass occupies residues 10–32; it reads LIVIITILITTRELSTTMLIVSL. A compositionally biased stretch (polar residues) spans 49-64; sequence ENNTFSMPQKNSFNES. The tract at residues 49–69 is disordered; the sequence is ENNTFSMPQKNSFNESYNKDK. N-linked (GlcNAc...) asparagine; by host glycans are attached at residues asparagine 50 and asparagine 62.

The protein belongs to the asfivirus H108R family.

The protein resides in the virion membrane. This African swine fever virus (strain Badajoz 1971 Vero-adapted) (Ba71V) protein is Inner membrane protein H108R.